The primary structure comprises 329 residues: Anthranilate phosphoribosyltransferase (329 aa).

5-phospho-alpha-D-ribose 1-diphosphate-binding positions include glycine 78, 81 to 82 (GD), threonine 86, 88 to 91 (NLST), 106 to 114 (KHGNRSASG), and serine 118. Glycine 78 serves as a coordination point for anthranilate. Mg(2+) is bound at residue serine 90. Asparagine 109 lines the anthranilate pocket. Arginine 164 provides a ligand contact to anthranilate. Positions 221 and 222 each coordinate Mg(2+).

This sequence belongs to the anthranilate phosphoribosyltransferase family. As to quaternary structure, homodimer. It depends on Mg(2+) as a cofactor.

It catalyses the reaction N-(5-phospho-beta-D-ribosyl)anthranilate + diphosphate = 5-phospho-alpha-D-ribose 1-diphosphate + anthranilate. It participates in amino-acid biosynthesis; L-tryptophan biosynthesis; L-tryptophan from chorismate: step 2/5. Catalyzes the transfer of the phosphoribosyl group of 5-phosphorylribose-1-pyrophosphate (PRPP) to anthranilate to yield N-(5'-phosphoribosyl)-anthranilate (PRA). This chain is Anthranilate phosphoribosyltransferase, found in Pyrobaculum islandicum (strain DSM 4184 / JCM 9189 / GEO3).